Consider the following 365-residue polypeptide: L-lactate oxidase (365 aa).

The FMN hydroxy acid dehydrogenase domain maps to 2–365 (TAISSPINLF…QDIDTSFLHL (364 aa)). Tyr-28 is a binding site for pyruvate. FMN contacts are provided by residues 81–83 (PMA), Ser-110, and Gln-135. Tyr-137 contributes to the pyruvate binding site. Thr-163 contacts FMN. Residue Arg-172 participates in pyruvate binding. Positions 239 and 261 each coordinate FMN. 2 residues coordinate pyruvate: His-263 and Arg-266. His-263 acts as the Proton acceptor in catalysis. Residues 294-298 (DGGIR) and Arg-318 contribute to the FMN site.

The protein belongs to the FMN-dependent alpha-hydroxy acid dehydrogenase family. Homotetramer. Requires FMN as cofactor.

It carries out the reaction (S)-lactate + O2 = pyruvate + H2O2. It catalyses the reaction glyoxylate + O2 + H2O = oxalate + H2O2 + H(+). Catalyzes the oxidation of (S)-lactate (L-lactate) to pyruvate, with a reduction of O2 to H2O2. In extant N2-fixing cyanobacteria such as Nostoc, this enzyme primarily serves as an O2-scavenging enzyme, protecting nitrogenase that is extremely sensitive to O2, and is therefore an essential partner in N2 fixation. Also shows clear oxidase activity with glyoxylate in vitro, and low activity with glycerate, hydroxypyruvate and glycolate. The very low glycolate oxidase activity indicates that this enzyme is unlikely to be involved in photorespiratory glycolate metabolism, a pathway that seems to exist in this cyanobacterium, but in which the oxidation of glycolate is taken over by glycolate dehydrogenase (GlcD). Is not able to use D-lactate as substrate and does not show any dehydrogenase activity with NAD(+) or NADP(+). In Nostoc sp. (strain PCC 7120 / SAG 25.82 / UTEX 2576), this protein is L-lactate oxidase.